A 131-amino-acid chain; its full sequence is EG45-like domain containing protein (131 aa).

The first 24 residues, 1-24 (MGVGTKVLVITTMAICLISSAAYA), serve as a signal peptide directing secretion. Positions 27–131 (GTATFYTPPY…GKIKIEFNQA (105 aa)) constitute an Expansin-like EG45; incomplete domain. Cys73 and Cys85 are disulfide-bonded.

In terms of tissue distribution, expressed in the outer layer of xylem and the vascular cambial zone of roots, in shoot cambium, but not in leaves.

Its subcellular location is the secreted. Might have a systemic role in water and solute homeostasis. Has no expansin-like activity. This chain is EG45-like domain containing protein (CjBAp12), found in Citrus jambhiri (Rough lemon).